Reading from the N-terminus, the 288-residue chain is Bifunctional protein FolD (288 aa).

NADP(+) contacts are provided by residues 166-168 and Ile232; that span reads GAS.

This sequence belongs to the tetrahydrofolate dehydrogenase/cyclohydrolase family. In terms of assembly, homodimer.

The enzyme catalyses (6R)-5,10-methylene-5,6,7,8-tetrahydrofolate + NADP(+) = (6R)-5,10-methenyltetrahydrofolate + NADPH. The catalysed reaction is (6R)-5,10-methenyltetrahydrofolate + H2O = (6R)-10-formyltetrahydrofolate + H(+). The protein operates within one-carbon metabolism; tetrahydrofolate interconversion. In terms of biological role, catalyzes the oxidation of 5,10-methylenetetrahydrofolate to 5,10-methenyltetrahydrofolate and then the hydrolysis of 5,10-methenyltetrahydrofolate to 10-formyltetrahydrofolate. In Salmonella arizonae (strain ATCC BAA-731 / CDC346-86 / RSK2980), this protein is Bifunctional protein FolD.